Here is a 123-residue protein sequence, read N- to C-terminus: MARVTVEDCLDNVDNRFELVLAGAKRARQLAKGIEPLVDWENDKPTVVALREIAAGHVTSEILTSTEESAADSLSLGGFSTADVEAEVGGGPVQPDPGASQERAFDEAADGTAQGSGDPDPTT.

The disordered stretch occupies residues 67-123; that stretch reads EESAADSLSLGGFSTADVEAEVGGGPVQPDPGASQERAFDEAADGTAQGSGDPDPTT.

The protein belongs to the RNA polymerase subunit omega family. The RNAP catalytic core consists of 2 alpha, 1 beta, 1 beta' and 1 omega subunit. When a sigma factor is associated with the core the holoenzyme is formed, which can initiate transcription.

The enzyme catalyses RNA(n) + a ribonucleoside 5'-triphosphate = RNA(n+1) + diphosphate. Promotes RNA polymerase assembly. Latches the N- and C-terminal regions of the beta' subunit thereby facilitating its interaction with the beta and alpha subunits. This is DNA-directed RNA polymerase subunit omega from Halorhodospira halophila (strain DSM 244 / SL1) (Ectothiorhodospira halophila (strain DSM 244 / SL1)).